We begin with the raw amino-acid sequence, 500 residues long: Protein nucleotidyltransferase YdiU (500 aa).

The ATP site is built by G96, G98, R99, K119, D131, G132, R182, and R189. D258 (proton acceptor) is an active-site residue. 2 residues coordinate Mg(2+): N259 and D268. D268 serves as a coordination point for ATP.

This sequence belongs to the SELO family. It depends on Mg(2+) as a cofactor. Mn(2+) is required as a cofactor.

The catalysed reaction is L-seryl-[protein] + ATP = 3-O-(5'-adenylyl)-L-seryl-[protein] + diphosphate. The enzyme catalyses L-threonyl-[protein] + ATP = 3-O-(5'-adenylyl)-L-threonyl-[protein] + diphosphate. It carries out the reaction L-tyrosyl-[protein] + ATP = O-(5'-adenylyl)-L-tyrosyl-[protein] + diphosphate. It catalyses the reaction L-histidyl-[protein] + UTP = N(tele)-(5'-uridylyl)-L-histidyl-[protein] + diphosphate. The catalysed reaction is L-seryl-[protein] + UTP = O-(5'-uridylyl)-L-seryl-[protein] + diphosphate. The enzyme catalyses L-tyrosyl-[protein] + UTP = O-(5'-uridylyl)-L-tyrosyl-[protein] + diphosphate. Nucleotidyltransferase involved in the post-translational modification of proteins. It can catalyze the addition of adenosine monophosphate (AMP) or uridine monophosphate (UMP) to a protein, resulting in modifications known as AMPylation and UMPylation. This Rhizobium etli (strain ATCC 51251 / DSM 11541 / JCM 21823 / NBRC 15573 / CFN 42) protein is Protein nucleotidyltransferase YdiU.